A 131-amino-acid chain; its full sequence is Large ribosomal subunit protein eL32 (131 aa).

The protein belongs to the eukaryotic ribosomal protein eL32 family.

In Eremothecium gossypii (strain ATCC 10895 / CBS 109.51 / FGSC 9923 / NRRL Y-1056) (Yeast), this protein is Large ribosomal subunit protein eL32 (RPL32).